Consider the following 147-residue polypeptide: 3-hydroxyacyl-[acyl-carrier-protein] dehydratase FabZ (147 aa).

The active site involves histidine 48.

The protein belongs to the thioester dehydratase family. FabZ subfamily.

The protein resides in the cytoplasm. It carries out the reaction a (3R)-hydroxyacyl-[ACP] = a (2E)-enoyl-[ACP] + H2O. Involved in unsaturated fatty acids biosynthesis. Catalyzes the dehydration of short chain beta-hydroxyacyl-ACPs and long chain saturated and unsaturated beta-hydroxyacyl-ACPs. This Aliarcobacter butzleri (strain RM4018) (Arcobacter butzleri) protein is 3-hydroxyacyl-[acyl-carrier-protein] dehydratase FabZ.